A 428-amino-acid polypeptide reads, in one-letter code: Serine--tRNA ligase (428 aa).

Thr-235–Glu-237 provides a ligand contact to L-serine. Arg-266–Glu-268 provides a ligand contact to ATP. Glu-289 contributes to the L-serine binding site. ATP is bound at residue Glu-353–Ser-356. Ser-389 serves as a coordination point for L-serine.

This sequence belongs to the class-II aminoacyl-tRNA synthetase family. Type-1 seryl-tRNA synthetase subfamily. As to quaternary structure, homodimer. The tRNA molecule binds across the dimer.

Its subcellular location is the cytoplasm. It carries out the reaction tRNA(Ser) + L-serine + ATP = L-seryl-tRNA(Ser) + AMP + diphosphate + H(+). It catalyses the reaction tRNA(Sec) + L-serine + ATP = L-seryl-tRNA(Sec) + AMP + diphosphate + H(+). The protein operates within aminoacyl-tRNA biosynthesis; selenocysteinyl-tRNA(Sec) biosynthesis; L-seryl-tRNA(Sec) from L-serine and tRNA(Sec): step 1/1. In terms of biological role, catalyzes the attachment of serine to tRNA(Ser). Is also able to aminoacylate tRNA(Sec) with serine, to form the misacylated tRNA L-seryl-tRNA(Sec), which will be further converted into selenocysteinyl-tRNA(Sec). This chain is Serine--tRNA ligase, found in Shewanella woodyi (strain ATCC 51908 / MS32).